Reading from the N-terminus, the 155-residue chain is Endoribonuclease YbeY (155 aa).

The Zn(2+) site is built by His-114, His-118, and His-124.

This sequence belongs to the endoribonuclease YbeY family. Zn(2+) serves as cofactor.

The protein resides in the cytoplasm. Single strand-specific metallo-endoribonuclease involved in late-stage 70S ribosome quality control and in maturation of the 3' terminus of the 16S rRNA. The protein is Endoribonuclease YbeY of Cronobacter sakazakii (strain ATCC BAA-894) (Enterobacter sakazakii).